A 486-amino-acid polypeptide reads, in one-letter code: Bifunctional protein HldE (486 aa).

Residues 1–331 (MSTNVADLLH…NALTAESVPV (331 aa)) form a ribokinase region. 207-210 (NLGE) contacts ATP. Aspartate 276 is an active-site residue. The interval 358-486 (VTNGCFDLLH…STTKLIEKGH (129 aa)) is cytidylyltransferase.

It in the N-terminal section; belongs to the carbohydrate kinase PfkB family. The protein in the C-terminal section; belongs to the cytidylyltransferase family. In terms of assembly, homodimer.

It carries out the reaction D-glycero-beta-D-manno-heptose 7-phosphate + ATP = D-glycero-beta-D-manno-heptose 1,7-bisphosphate + ADP + H(+). The enzyme catalyses D-glycero-beta-D-manno-heptose 1-phosphate + ATP + H(+) = ADP-D-glycero-beta-D-manno-heptose + diphosphate. It participates in nucleotide-sugar biosynthesis; ADP-L-glycero-beta-D-manno-heptose biosynthesis; ADP-L-glycero-beta-D-manno-heptose from D-glycero-beta-D-manno-heptose 7-phosphate: step 1/4. It functions in the pathway nucleotide-sugar biosynthesis; ADP-L-glycero-beta-D-manno-heptose biosynthesis; ADP-L-glycero-beta-D-manno-heptose from D-glycero-beta-D-manno-heptose 7-phosphate: step 3/4. Catalyzes the phosphorylation of D-glycero-D-manno-heptose 7-phosphate at the C-1 position to selectively form D-glycero-beta-D-manno-heptose-1,7-bisphosphate. In terms of biological role, catalyzes the ADP transfer from ATP to D-glycero-beta-D-manno-heptose 1-phosphate, yielding ADP-D-glycero-beta-D-manno-heptose. In Koribacter versatilis (strain Ellin345), this protein is Bifunctional protein HldE.